Consider the following 184-residue polypeptide: MKIKTLAIVVLSALSLSSTAALADTTPTTVNGGTVHFKGEVVNAACAVDAGSVDQTVQLGQVRTATLKQAGATSSAVGFNIQLNDCDTTVATKAAVAFLGTAIDSTHPKVLALQSSAAGSATNVGVQILDRTGNELTLDGATFSAETTLNNGTNTIPFQARYFATGAATPGAANADATFKVQYQ.

The signal sequence occupies residues 1–23 (MKIKTLAIVVLSALSLSSTAALA). An intrachain disulfide couples Cys-46 to Cys-86.

It belongs to the fimbrial protein family.

The protein resides in the fimbrium. In terms of biological role, fimbriae (also called pili), polar filaments radiating from the surface of the bacterium to a length of 0.5-1.5 micrometers and numbering 100-300 per cell, enable bacteria to colonize the epithelium of specific host organs. The chain is Type-1 fimbrial protein, A chain from Escherichia coli.